Here is a 266-residue protein sequence, read N- to C-terminus: UPF0246 protein PHZ_c0561 (266 aa).

A disordered region spans residues 245 to 266 (DEEFTFARPQPPPPAASRNKED).

The protein belongs to the UPF0246 family.

The polypeptide is UPF0246 protein PHZ_c0561 (Phenylobacterium zucineum (strain HLK1)).